The chain runs to 251 residues: Adapter protein MecA (251 aa).

This sequence belongs to the MecA family. In terms of assembly, homodimer.

In terms of biological role, enables the recognition and targeting of unfolded and aggregated proteins to the ClpC protease or to other proteins involved in proteolysis. This chain is Adapter protein MecA, found in Streptococcus agalactiae serotype Ia (strain ATCC 27591 / A909 / CDC SS700).